A 644-amino-acid chain; its full sequence is Low affinity sulfate transporter 3 (644 aa).

The segment covering 1 to 19 (MSSLGTEQFSERSQWVLNS) has biased composition (polar residues). Positions 1–20 (MSSLGTEQFSERSQWVLNSP) are disordered. A run of 13 helical transmembrane segments spans residues 50 to 70 (AVSFLASLFPILSWIRTYSAT), 76 to 96 (LLSGLTLASLSIPQSIGYANL), 99 to 119 (LDPQYGLYTSVIPPVIYALMG), 124 to 144 (IAIGPVAVVSMLLSSLVPKVI), 156 to 176 (LVFTVTLFAGIFQTAFGVLRL), 179 to 199 (LVDFLSHAALVGFMAGAAIVI), 242 to 262 (PLNFVIGCSFLIFLLAARFIG), 268 to 288 (FFWLPAIAPLLSVILSTLIVF), 328 to 348 (IGLISAIIALTEAIAVGRSFA), 394 to 414 (CKTAVSNIVMAVTVLLCLELF), 418 to 438 (LYYTPMAILASIILSALPGLI), 455 to 475 (LACLGAFFGVLFVSIEIGLLI), and 518 to 538 (PGILVIRISSGSLCFANAGFV). Positions 511–635 (YPMAVTTPGI…LTVAEAVDAC (125 aa)) constitute an STAS domain.

Belongs to the SLC26A/SulP transporter (TC 2.A.53) family.

The protein resides in the membrane. Functionally, low-affinity H(+)/sulfate cotransporter which may be involved in the internal transport of sulfate between cellular or subcellular compartments within the plant. The polypeptide is Low affinity sulfate transporter 3 (ST3) (Stylosanthes hamata (Caribbean stylo)).